Consider the following 348-residue polypeptide: D-alanine--D-alanine ligase (348 aa).

The region spanning 132–334 (KRILEVAGVP…YSDLIKELVV (203 aa)) is the ATP-grasp domain. Position 162–217 (162–217 (LEKLTFPVFVKPANMGSSVGISKAENESELRSAIDLALKYDSRILIEQGVVAREIE)) interacts with ATP. Positions 288, 301, and 303 each coordinate Mg(2+).

Belongs to the D-alanine--D-alanine ligase family. The cofactor is Mg(2+). Mn(2+) serves as cofactor.

The protein resides in the cytoplasm. The catalysed reaction is 2 D-alanine + ATP = D-alanyl-D-alanine + ADP + phosphate + H(+). Its pathway is cell wall biogenesis; peptidoglycan biosynthesis. In terms of biological role, cell wall formation. This is D-alanine--D-alanine ligase from Streptococcus thermophilus (strain ATCC BAA-491 / LMD-9).